Here is a 91-residue protein sequence, read N- to C-terminus: Alpha-defensin 31 (91 aa).

Positions 1 to 19 are cleaved as a signal peptide; that stretch reads MKKLVLLFALVLLAFQVQA. Positions 20–65 are excised as a propeptide; that stretch reads DSIQNTDEETKTEEQQGEEDQAVSVSFGDPQGSGLQDAALGWGRRC. A disordered region spans residues 22 to 55; sequence IQNTDEETKTEEQQGEEDQAVSVSFGDPQGSGLQ. A run of 6 repeats spans residues 65–67, 68–70, 71–73, 77–79, 80–82, and 83–85. The segment at 65-85 is 6 X 3 AA tandem repeats of C-P-X; it reads CPRCPPCPRCSWCPRCPTCPR.

It belongs to the alpha-defensin family. Paneth cells of the small bowel.

It is found in the secreted. In terms of biological role, apparent precursor of a secreted, cationic, proline- and cysteine-rich peptide that contains Cys-Pro-Xaa repeats. Unlike cryptdin, the proposed mature peptide region lacks the structural motif characteristic of defensins. It may have microbicidal activities. This chain is Alpha-defensin 31, found in Mus musculus (Mouse).